A 104-amino-acid polypeptide reads, in one-letter code: Flagellar hook-basal body complex protein FliE (104 aa).

Belongs to the FliE family.

The protein resides in the bacterial flagellum basal body. The polypeptide is Flagellar hook-basal body complex protein FliE (Pectobacterium atrosepticum (strain SCRI 1043 / ATCC BAA-672) (Erwinia carotovora subsp. atroseptica)).